A 66-amino-acid chain; its full sequence is U10-theraphotoxin-Cg1a 3 (66 aa).

The N-terminal stretch at 1–21 (MKTSVLFVIFGLALLFCLSFA) is a signal peptide. The propeptide occupies 22 to 29 (DELEDTGR). 3 disulfides stabilise this stretch: C31–C46, C38–C51, and C45–C58.

Belongs to the neurotoxin 10 (Hwtx-1) family. 29 (Jztx-13) subfamily. As to expression, expressed by the venom gland.

It localises to the secreted. Its function is as follows. Probable ion channel inhibitor. The protein is U10-theraphotoxin-Cg1a 3 of Chilobrachys guangxiensis (Chinese earth tiger tarantula).